A 62-amino-acid polypeptide reads, in one-letter code: Large ribosomal subunit protein uL30 (62 aa).

It belongs to the universal ribosomal protein uL30 family. Part of the 50S ribosomal subunit.

In Shouchella clausii (strain KSM-K16) (Alkalihalobacillus clausii), this protein is Large ribosomal subunit protein uL30.